A 159-amino-acid polypeptide reads, in one-letter code: MSNQTDSVNKSFKTVDEITNKTVDETTNKSVDEATSKLIGKIIKRSSKIDKELEKLQLSIKGNKLVISHQDNIIGNVYQYKGKYHCMCFISQEWVEEINDWYRCCDNECDDHDDIPRTIPYPNNGMDYEVPAIKFIIDNECHLNEAVFKVWKCWKTTNK.

The protein belongs to the mimivirus L15/L51/R83 family.

This is an uncharacterized protein from Acanthamoeba polyphaga mimivirus (APMV).